We begin with the raw amino-acid sequence, 185 residues long: Elongation factor P (185 aa).

This sequence belongs to the elongation factor P family.

Its subcellular location is the cytoplasm. It participates in protein biosynthesis; polypeptide chain elongation. Functionally, involved in peptide bond synthesis. Stimulates efficient translation and peptide-bond synthesis on native or reconstituted 70S ribosomes in vitro. Probably functions indirectly by altering the affinity of the ribosome for aminoacyl-tRNA, thus increasing their reactivity as acceptors for peptidyl transferase. The chain is Elongation factor P from Burkholderia multivorans (strain ATCC 17616 / 249).